Consider the following 263-residue polypeptide: MGGEGGADDSVVHFVFVHGASHGAWCWYKLTTLLVAAGFKATSVDLTGAGINLTDSNTVFDFDHYNRPLFSLLSDLPSHHKIVLVGHSIGGGSVTEALCKFTDKISMVVYLAADMVQPGSTSSTHDSIMTVGEEDIWEYIYGEGADKPPTGVLMKEEFRRHYYYSQSPLEDVSLASKLLRPAPVRALGGADKLSPNPEAEKVPRVYIKTAKDNLFDPLRQDRLVEKWPPSQLYILEESDHSAFFSVPTTLFAYLLRAVSFLQL.

Residues 13–244 (HFVFVHGASH…LEESDHSAFF (232 aa)) enclose the AB hydrolase-1 domain. Ser88 (acyl-ester intermediate) is an active-site residue. Catalysis depends on charge relay system residues Asp212 and His240.

This sequence belongs to the AB hydrolase superfamily. Homodimer.

Its subcellular location is the cytoplasm. It carries out the reaction pheophorbide a + H2O + H(+) = pyropheophorbide a + methanol + CO2. With respect to regulation, inhibited by methanol and phenylmethylsulfonicfluoride (PMSF). Functionally, involved in chlorophyll degradation. Specific for the pheophorbides of the dihydroporphyrin and tetrahydroporphyrin types. Chlorophyllide a, pheophytin a and the nonfluorescent chlorophyll catabolite (NCC) are not used as substrates. The chain is Pheophorbidase (PPD) from Raphanus sativus (Radish).